Consider the following 522-residue polypeptide: Target of rapamycin complex 2 subunit MAPKAP1 (522 aa).

N-acetylalanine is present on Ala-2. Positions 2–184 are interaction with MAP3K2; sequence AFLDNPTIIL…KKIDVYLPLH (183 aa). An interaction with NBN region spans residues 2-267; sequence AFLDNPTIIL…GFSTLALVEK (266 aa). The tract at residues 38–59 is disordered; it reads LEKTHPPSVPGDSGSEVQGSSG. A Phosphothreonine; by PKB/AKT1 and RPS6KB1 modification is found at Thr-86. A Phosphoserine; by PKC modification is found at Ser-128. A CRIM domain is found at 139–267; it reads QSILSVRLEQ…GFSTLALVEK (129 aa). Residues Ser-186, Ser-315, and Ser-356 each carry the phosphoserine modification. The interval 279–353 is SIN1-type RBD; that stretch reads LFVRINAAHG…QNAWEFCLVR (75 aa). Residues 382–487 enclose the SIN1-type PH domain; that stretch reads HYKSFKVSMI…IVLKVNYILE (106 aa). Residue Arg-393 participates in a 1,2-diacyl-sn-glycero-3-phospho-(1D-myo-inositol-3,4,5-trisphosphate) binding. Thr-398 is subject to Phosphothreonine; by RPS6KB1. 2 residues coordinate a 1,2-diacyl-sn-glycero-3-phospho-(1D-myo-inositol-3,4,5-trisphosphate): Lys-428 and Lys-464. Residues 468-522 form an interaction with ATF2 region; the sequence is FESDAATVSEIVLKVNYILESRASTARADYLAQKQRKLNRRTSFSFQKEKKSGQQ. The residue at position 510 (Ser-510) is a Phosphoserine.

The protein belongs to the SIN1 family. Component of the mechanistic target of rapamycin complex 2 (mTORC2), consisting in two heterotretramers composed of MTOR, MLST8, RICTOR and MAPKAP1/SIN1. The mTORC2 core complex associates with PRR5/PROTOR1 and/or PRR5L/PROTOR2. Contrary to mTORC1, mTORC2 does not bind to and is not sensitive to FKBP12-rapamycin. Interacts with MAP3K2. Interacts with ATF2. Interacts with MAPK8. Interacts with GTP-bound HRAS and KRAS; inhibiting their activity. Interacts with IFNAR2. Phosphorylation at Ser-128 by PKC promotes relocalization to the perinuclear region, where the mTORC2 complex specifically mediates phosphorylation of SGK1. Phosphorylated at Thr-86 by AKT1 or RPS6KB1 in the presence of growth factors; the effect of this phosphorylation is however unclear. According to two studies, phosphorylation at Thr-86 by AKT1 is part of a positive feedback loop that increases mTORC2 activation. According to another study, phosphorylation at Thr-86 and Thr-398 by RPS6KB1 promotes dissociation from the mTORC2 complex, leading to inhibit mTORC2 signaling. As to expression, uniquitously expressed, with highest levels in testis, kidney and liver. Present in renal tubule cells (at protein level).

The protein localises to the cell membrane. The protein resides in the endoplasmic reticulum membrane. It localises to the early endosome membrane. It is found in the late endosome membrane. Its subcellular location is the lysosome membrane. The protein localises to the golgi apparatus membrane. The protein resides in the mitochondrion outer membrane. It localises to the cytoplasm. It is found in the perinuclear region. Its subcellular location is the nucleus. With respect to regulation, phosphatidylinositol 3,4,5-trisphosphate (PI(3,4,5)P3) promotes MTOR activation by relieving MAPKAP1/SIN1-mediated inhibition of MTOR that takes place in absence of PI(3,4,5)P3. In terms of biological role, component of the mechanistic target of rapamycin complex 2 (mTORC2), which transduces signals from growth factors to pathways involved in proliferation, cytoskeletal organization, lipogenesis and anabolic output. In response to growth factors, mTORC2 phosphorylates and activates AGC protein kinase family members, including AKT (AKT1, AKT2 and AKT3), PKC (PRKCA, PRKCB and PRKCE) and SGK1. In contrast to mTORC1, mTORC2 is nutrient-insensitive. Within the mTORC2 complex, MAPKAP1/SIN1 acts as a substrate adapter which recognizes and binds AGC protein kinase family members for phosphorylation by MTOR. mTORC2 plays a critical role in AKT1 activation by mediating phosphorylation of different sites depending on the context, such as 'Thr-450', 'Ser-473', 'Ser-477' or 'Thr-479', facilitating the phosphorylation of the activation loop of AKT1 on 'Thr-308' by PDPK1/PDK1 which is a prerequisite for full activation. mTORC2 catalyzes the phosphorylation of SGK1 at 'Ser-422' and of PRKCA on 'Ser-657'. The mTORC2 complex also phosphorylates various proteins involved in insulin signaling, such as FBXW8 and IGF2BP1. mTORC2 acts upstream of Rho GTPases to regulate the actin cytoskeleton, probably by activating one or more Rho-type guanine nucleotide exchange factors. mTORC2 promotes the serum-induced formation of stress-fibers or F-actin. MAPKAP1 inhibits MAP3K2 by preventing its dimerization and autophosphorylation. Inhibits HRAS and KRAS independently of mTORC2 complex. Enhances osmotic stress-induced phosphorylation of ATF2 and ATF2-mediated transcription. Involved in ciliogenesis, regulates cilia length through its interaction with CCDC28B independently of mTORC2 complex. The polypeptide is Target of rapamycin complex 2 subunit MAPKAP1 (Mus musculus (Mouse)).